A 188-amino-acid chain; its full sequence is ATP synthase subunit delta (188 aa).

Belongs to the ATPase delta chain family. In terms of assembly, F-type ATPases have 2 components, F(1) - the catalytic core - and F(0) - the membrane proton channel. F(1) has five subunits: alpha(3), beta(3), gamma(1), delta(1), epsilon(1). F(0) has three main subunits: a(1), b(2) and c(10-14). The alpha and beta chains form an alternating ring which encloses part of the gamma chain. F(1) is attached to F(0) by a central stalk formed by the gamma and epsilon chains, while a peripheral stalk is formed by the delta and b chains.

It is found in the cell inner membrane. F(1)F(0) ATP synthase produces ATP from ADP in the presence of a proton or sodium gradient. F-type ATPases consist of two structural domains, F(1) containing the extramembraneous catalytic core and F(0) containing the membrane proton channel, linked together by a central stalk and a peripheral stalk. During catalysis, ATP synthesis in the catalytic domain of F(1) is coupled via a rotary mechanism of the central stalk subunits to proton translocation. Its function is as follows. This protein is part of the stalk that links CF(0) to CF(1). It either transmits conformational changes from CF(0) to CF(1) or is implicated in proton conduction. In Rhizobium rhizogenes (strain K84 / ATCC BAA-868) (Agrobacterium radiobacter), this protein is ATP synthase subunit delta.